A 419-amino-acid chain; its full sequence is Gamma-glutamyl phosphate reductase (419 aa).

Belongs to the gamma-glutamyl phosphate reductase family.

The protein resides in the cytoplasm. The catalysed reaction is L-glutamate 5-semialdehyde + phosphate + NADP(+) = L-glutamyl 5-phosphate + NADPH + H(+). The protein operates within amino-acid biosynthesis; L-proline biosynthesis; L-glutamate 5-semialdehyde from L-glutamate: step 2/2. In terms of biological role, catalyzes the NADPH-dependent reduction of L-glutamate 5-phosphate into L-glutamate 5-semialdehyde and phosphate. The product spontaneously undergoes cyclization to form 1-pyrroline-5-carboxylate. The polypeptide is Gamma-glutamyl phosphate reductase (Solidesulfovibrio magneticus (strain ATCC 700980 / DSM 13731 / RS-1) (Desulfovibrio magneticus)).